A 363-amino-acid chain; its full sequence is Probable transglycosylase BTH_I0986 (363 aa).

It belongs to the glycosyltransferase group 1 family. Glycosyltransferase 4 subfamily.

Probably a transglycosylase. Probably involved in synthesis of the outer membrane receptor for a cellular contact-dependent growth inhibition (CDI) system. This Burkholderia thailandensis (strain ATCC 700388 / DSM 13276 / CCUG 48851 / CIP 106301 / E264) protein is Probable transglycosylase BTH_I0986.